A 114-amino-acid polypeptide reads, in one-letter code: Phosphoribosyl-AMP cyclohydrolase (114 aa).

Mg(2+) is bound at residue aspartate 80. Cysteine 81 is a Zn(2+) binding site. Mg(2+)-binding residues include aspartate 82 and aspartate 84. Zn(2+) is bound by residues cysteine 97 and cysteine 104.

The protein belongs to the PRA-CH family. As to quaternary structure, homodimer. The cofactor is Mg(2+). Zn(2+) serves as cofactor.

It localises to the cytoplasm. The catalysed reaction is 1-(5-phospho-beta-D-ribosyl)-5'-AMP + H2O = 1-(5-phospho-beta-D-ribosyl)-5-[(5-phospho-beta-D-ribosylamino)methylideneamino]imidazole-4-carboxamide. The protein operates within amino-acid biosynthesis; L-histidine biosynthesis; L-histidine from 5-phospho-alpha-D-ribose 1-diphosphate: step 3/9. Catalyzes the hydrolysis of the adenine ring of phosphoribosyl-AMP. The protein is Phosphoribosyl-AMP cyclohydrolase of Rhodococcus jostii (strain RHA1).